Reading from the N-terminus, the 289-residue chain is Enoyl-CoA hydratase domain-containing protein 3, mitochondrial (289 aa).

A mitochondrion-targeting transit peptide spans 1–14 (MLLRGFSELLKCRG).

This sequence belongs to the enoyl-CoA hydratase/isomerase family.

It is found in the mitochondrion. Its function is as follows. May play a role in fatty acid biosynthesis and insulin sensitivity. In Danio rerio (Zebrafish), this protein is Enoyl-CoA hydratase domain-containing protein 3, mitochondrial (echdc3).